Reading from the N-terminus, the 487-residue chain is Arginine ADP-riboxanase CopC (487 aa).

The segment covering 1–12 (MRVENHSPSLSK) has biased composition (polar residues). The tract at residues 1–27 (MRVENHSPSLSKLNPPEAGSGDPTAIG) is disordered. 8 residues coordinate NAD(+): His-137, Gln-138, Ser-139, Leu-143, Ala-150, Ala-152, Asn-154, and Leu-157. His-137 provides a ligand contact to nicotinamide. Residues Ser-139 and Leu-143 each contribute to the ADP-D-ribose site. ADP-D-ribose contacts are provided by Ala-152, Asn-154, Leu-157, Gly-166, Asn-167, Thr-168, and Phe-183. Asn-167 lines the NAD(+) pocket. Phe-183 lines the NAD(+) pocket. 4 residues coordinate nicotinamide: Phe-183, Phe-184, His-202, and Phe-207. An NAD(+)-binding site is contributed by His-202. The ADP-D-ribose site is built by Phe-207 and Asp-230. Positions 230 and 325 each coordinate NAD(+). Glu-325 contacts nicotinamide. The active site involves Glu-325. 2 ANK repeats span residues 368-398 (DAVTAMWHAIDKGKDAVAAHLLGNWRFEAGD) and 444-476 (SGETMLDNAVKYGNREMAAALIKHGADRNLLSE).

The protein belongs to the OspC family. As to quaternary structure, interacts with host calmodulin (CALM1, CALM2 and/or CALM3); specifically interacts with the apo form of calmodulin and calmodulin-binding is required to mediate arginine ADP-riboxanation of host caspases.

The protein localises to the secreted. It is found in the host cytoplasm. It carries out the reaction L-arginyl-[protein] + NAD(+) = ADP-riboxanated L-argininyl-[protein] + nicotinamide + NH4(+) + H(+). With respect to regulation, interaction with host calmodulin (CALM1, CALM2 and/or CALM3) is required to mediate arginine ADP-riboxanation of host caspases. Functionally, ADP-riboxanase effector that inhibits host cell programmed cell death. Acts by mediating arginine ADP-riboxanation of host caspases (CASP3, CASP7, CASP8 and CASP9), blocking their processing and activation. ADP-riboxanation of host apoptotic caspases (CASP3, CASP7, CASP8 and CASP9) prevents their activation, thereby inhibiting host cell apoptosis. ADP-riboxanation of host CASP8 also inhibits host cell necroptosis. ADP-riboxanation of host CASP3 also abolishes pyroptosis by preventing its ability to cleave GSDME. May also able to inactivate CASP4/CASP11, blocking inhibiting LPS-induced pyroptosis; however this activity is unsure in vivo. ADP-riboxanation takes place in several steps: CopC first binds host caspases and NAD(+); NAD(+) is hydrolyzed to nicotinamide and ADP-D-ribose. CopC then transfers the ADP-D-ribose to the modified arginine of caspases and forms the ADP-D-ribose-deacylization on arginine, leading to deamination to remove one N-omega group on target arginine. The polypeptide is Arginine ADP-riboxanase CopC (Chromobacterium violaceum (strain ATCC 12472 / DSM 30191 / JCM 1249 / CCUG 213 / NBRC 12614 / NCIMB 9131 / NCTC 9757 / MK)).